Consider the following 158-residue polypeptide: Small ribosomal subunit protein uS7 (158 aa).

It belongs to the universal ribosomal protein uS7 family. Part of the 30S ribosomal subunit. Contacts proteins S9 and S11.

Functionally, one of the primary rRNA binding proteins, it binds directly to 16S rRNA where it nucleates assembly of the head domain of the 30S subunit. Is located at the subunit interface close to the decoding center, probably blocks exit of the E-site tRNA. This chain is Small ribosomal subunit protein uS7, found in Parabacteroides distasonis (strain ATCC 8503 / DSM 20701 / CIP 104284 / JCM 5825 / NCTC 11152).